The sequence spans 441 residues: Velvet complex subunit B (441 aa).

Polar residues-rich tracts occupy residues methionine 1–histidine 14 and methionine 60–glutamate 75. Residues methionine 1–arginine 104 are disordered. The Velvet domain maps to glutamate 100–arginine 426.

The protein belongs to the velvet family. VelB subfamily. Component of the heterotrimeric velvet complex composed of LAEA, VEA and VELB; VEA acting as a bridging protein between LAEA and VELB. Forms a heterodimeric complex with VOSA; the formation of the VELB-VOSA complex is light-dependent.

The protein resides in the nucleus. The protein localises to the cytoplasm. In terms of biological role, component of the velvet transcription factor complex that controls sexual/asexual developmental ratio in response to light, promoting sexual development in the darkness while stimulating asexual sporulation under illumination. The velvet complex acts as a global regulator for secondary metabolite gene expression. Component of the VELB-VOSA heterodimeric complex that plays a dual role in activating genes associated with spore maturation and repressing certain development-associated genes. The VELB-VOSA complex binds DNA through the DNA-binding domain of VOSA that recognizes an 11-nucleotide consensus sequence 5'-CTGGCCGCGGC-3' consisting of two motifs in the promoters of key developmental regulatory genes. Involved in the regulation of the response to eactive oxygen species (ROS) stress. This chain is Velvet complex subunit B, found in Pyricularia oryzae (strain 70-15 / ATCC MYA-4617 / FGSC 8958) (Rice blast fungus).